Reading from the N-terminus, the 412-residue chain is L-cysteine:1D-myo-inositol 2-amino-2-deoxy-alpha-D-glucopyranoside ligase (412 aa).

C45 serves as a coordination point for Zn(2+). L-cysteinyl-5'-AMP-binding positions include 45–48, T60, and 83–85; these read CGIT and NIT. Residues 47–57 carry the 'HIGH' region motif; sequence ITPYDAAHLGH. The short motif at 185–190 is the 'ERGGDP' region element; that stretch reads ERGGDP. An L-cysteinyl-5'-AMP-binding site is contributed by W225. Residue C229 participates in Zn(2+) binding. 247 to 249 serves as a coordination point for L-cysteinyl-5'-AMP; sequence GDD. H254 is a binding site for Zn(2+). Position 281 (V281) interacts with L-cysteinyl-5'-AMP. The 'KMSKS' region signature appears at 287–291; sequence KMSKS.

This sequence belongs to the class-I aminoacyl-tRNA synthetase family. MshC subfamily. Monomer. Zn(2+) serves as cofactor.

It catalyses the reaction 1D-myo-inositol 2-amino-2-deoxy-alpha-D-glucopyranoside + L-cysteine + ATP = 1D-myo-inositol 2-(L-cysteinylamino)-2-deoxy-alpha-D-glucopyranoside + AMP + diphosphate + H(+). In terms of biological role, catalyzes the ATP-dependent condensation of GlcN-Ins and L-cysteine to form L-Cys-GlcN-Ins. The sequence is that of L-cysteine:1D-myo-inositol 2-amino-2-deoxy-alpha-D-glucopyranoside ligase from Thermobifida fusca (strain YX).